We begin with the raw amino-acid sequence, 280 residues long: Undecaprenyl-diphosphatase (280 aa).

A run of 8 helical transmembrane segments spans residues 1–21 (MEWIQAAILGIVQGLTEFLPI), 40–60 (GAAFTAVSQLGTEAAVIVFFW), 89–109 (WLVVAGSIPIIVVGLFFQNAI), 116–136 (LWIVATTLIVFGVILAVADAV), 146–166 (LTVKHGILYGLAQCLALIPGV), 191–211 (FLLAIPAVLGSGFYELFKIVA), 227–247 (LATVIAFVVGYLIIGWFLKFI), and 260–280 (IALGLVVFVLLGFGVIPATLS).

This sequence belongs to the UppP family.

It localises to the cell membrane. It carries out the reaction di-trans,octa-cis-undecaprenyl diphosphate + H2O = di-trans,octa-cis-undecaprenyl phosphate + phosphate + H(+). Functionally, catalyzes the dephosphorylation of undecaprenyl diphosphate (UPP). Confers resistance to bacitracin. This is Undecaprenyl-diphosphatase from Renibacterium salmoninarum (strain ATCC 33209 / DSM 20767 / JCM 11484 / NBRC 15589 / NCIMB 2235).